The primary structure comprises 234 residues: Ribosomal RNA small subunit methyltransferase G (234 aa).

S-adenosyl-L-methionine-binding positions include G96, L101, 119–121, 147–148, and R161; these read DAT and VE.

This sequence belongs to the methyltransferase superfamily. RNA methyltransferase RsmG family.

It is found in the cytoplasm. Functionally, specifically methylates the N7 position of a guanine in 16S rRNA. This chain is Ribosomal RNA small subunit methyltransferase G, found in Chlorobium chlorochromatii (strain CaD3).